Reading from the N-terminus, the 429-residue chain is Enolase (429 aa).

Q162 serves as a coordination point for (2R)-2-phosphoglycerate. The Proton donor role is filled by E204. Residues D241, E283, and D310 each contribute to the Mg(2+) site. (2R)-2-phosphoglycerate contacts are provided by K335, R364, S365, and K386. The Proton acceptor role is filled by K335.

The protein belongs to the enolase family. Mg(2+) serves as cofactor.

Its subcellular location is the cytoplasm. It localises to the secreted. It is found in the cell surface. It carries out the reaction (2R)-2-phosphoglycerate = phosphoenolpyruvate + H2O. Its pathway is carbohydrate degradation; glycolysis; pyruvate from D-glyceraldehyde 3-phosphate: step 4/5. Its function is as follows. Catalyzes the reversible conversion of 2-phosphoglycerate (2-PG) into phosphoenolpyruvate (PEP). It is essential for the degradation of carbohydrates via glycolysis. The protein is Enolase of Mycobacterium bovis (strain BCG / Pasteur 1173P2).